Reading from the N-terminus, the 92-residue chain is Large ribosomal subunit protein eL43z (92 aa).

The C4-type zinc finger occupies 39 to 60 (CEFCGKYSVKRKVVGIWGCKDC).

The protein belongs to the eukaryotic ribosomal protein eL43 family.

This chain is Large ribosomal subunit protein eL43z (RPL37AB), found in Arabidopsis thaliana (Mouse-ear cress).